Consider the following 594-residue polypeptide: Trehalase (594 aa).

Positions 1–27 are cleaved as a signal peptide; sequence MDFLNKKIQKILFICILSFLIVNLTKS. N-linked (GlcNAc...) asparagine glycosylation is found at Asn-56, Asn-70, Asn-97, and Asn-166. Residues Arg-190, 197–198, and Asn-234 each bind substrate; that span reads WD. Asn-242 carries an N-linked (GlcNAc...) asparagine glycan. 243–245 lines the substrate pocket; sequence RSQ. N-linked (GlcNAc...) asparagine glycans are attached at residues Asn-261 and Asn-305. Substrate-binding positions include 312–314 and Gly-346; that span reads RPE. Residue Asp-348 is the Proton donor/acceptor of the active site. N-linked (GlcNAc...) asparagine glycosylation is found at Asn-361, Asn-395, Asn-513, and Asn-537. The Proton donor/acceptor role is filled by Glu-549. Glu-564 is a substrate binding site.

Belongs to the glycosyl hydrolase 37 family.

It catalyses the reaction alpha,alpha-trehalose + H2O = alpha-D-glucose + beta-D-glucose. The protein is Trehalase (treh) of Dictyostelium discoideum (Social amoeba).